The primary structure comprises 124 residues: Small ribosomal subunit protein uS12 (124 aa).

Residue aspartate 89 is modified to 3-methylthioaspartic acid.

Belongs to the universal ribosomal protein uS12 family. As to quaternary structure, part of the 30S ribosomal subunit. Contacts proteins S8 and S17. May interact with IF1 in the 30S initiation complex.

With S4 and S5 plays an important role in translational accuracy. In terms of biological role, interacts with and stabilizes bases of the 16S rRNA that are involved in tRNA selection in the A site and with the mRNA backbone. Located at the interface of the 30S and 50S subunits, it traverses the body of the 30S subunit contacting proteins on the other side and probably holding the rRNA structure together. The combined cluster of proteins S8, S12 and S17 appears to hold together the shoulder and platform of the 30S subunit. The sequence is that of Small ribosomal subunit protein uS12 from Pasteurella multocida (strain Pm70).